Consider the following 461-residue polypeptide: Cysteine--tRNA ligase (461 aa).

C28 contributes to the Zn(2+) binding site. Positions I30–H40 match the 'HIGH' region motif. The Zn(2+) site is built by C209, H234, and E238. The short motif at K266–S270 is the 'KMSKS' region element. K269 contacts ATP.

This sequence belongs to the class-I aminoacyl-tRNA synthetase family. As to quaternary structure, monomer. It depends on Zn(2+) as a cofactor.

It is found in the cytoplasm. It catalyses the reaction tRNA(Cys) + L-cysteine + ATP = L-cysteinyl-tRNA(Cys) + AMP + diphosphate. The protein is Cysteine--tRNA ligase of Escherichia fergusonii (strain ATCC 35469 / DSM 13698 / CCUG 18766 / IAM 14443 / JCM 21226 / LMG 7866 / NBRC 102419 / NCTC 12128 / CDC 0568-73).